The following is an 858-amino-acid chain: Leucine--tRNA ligase (858 aa).

Positions 43–54 match the 'HIGH' region motif; it reads PYPSGDGLHVGH. The 'KMSKS' region motif lies at 629–633; it reads KMSKS. Lysine 632 contributes to the ATP binding site.

Belongs to the class-I aminoacyl-tRNA synthetase family.

It localises to the cytoplasm. The catalysed reaction is tRNA(Leu) + L-leucine + ATP = L-leucyl-tRNA(Leu) + AMP + diphosphate. In Treponema denticola (strain ATCC 35405 / DSM 14222 / CIP 103919 / JCM 8153 / KCTC 15104), this protein is Leucine--tRNA ligase.